The primary structure comprises 337 residues: D-lactate dehydrogenase (337 aa).

NAD(+) contacts are provided by residues 156–157 (HI), Asp176, 207–208 (VP), Asn213, 234–236 (CSR), and Asp260. Arg236 is a catalytic residue. Glu265 is a catalytic residue. His297 functions as the Proton donor in the catalytic mechanism.

The protein belongs to the D-isomer specific 2-hydroxyacid dehydrogenase family. In terms of assembly, homodimer.

It carries out the reaction (R)-lactate + NAD(+) = pyruvate + NADH + H(+). The sequence is that of D-lactate dehydrogenase from Lactobacillus helveticus (Lactobacillus suntoryeus).